The primary structure comprises 186 residues: Ribosome-recycling factor (186 aa).

The protein belongs to the RRF family.

The protein resides in the cytoplasm. In terms of biological role, responsible for the release of ribosomes from messenger RNA at the termination of protein biosynthesis. May increase the efficiency of translation by recycling ribosomes from one round of translation to another. This chain is Ribosome-recycling factor, found in Nitratidesulfovibrio vulgaris (strain DP4) (Desulfovibrio vulgaris).